Reading from the N-terminus, the 158-residue chain is Transcription factor BTF3 homolog 4 (158 aa).

Lys5 carries the N6-methyllysine modification. The region spanning 33–98 is the NAC-A/B domain; sequence TADDKKLQSS…AEAKPITEML (66 aa). A Phosphothreonine modification is found at Thr111. A disordered region spans residues 122 to 158; it reads RQVLDSKAPKPEDIDEEDDDVPDLVENFDEASKNEAN. Residues 134–150 show a composition bias toward acidic residues; sequence DIDEEDDDVPDLVENFD.

This sequence belongs to the NAC-beta family.

The sequence is that of Transcription factor BTF3 homolog 4 (BTF3L4) from Homo sapiens (Human).